We begin with the raw amino-acid sequence, 474 residues long: tRNA-2-methylthio-N(6)-dimethylallyladenosine synthase (474 aa).

The MTTase N-terminal domain maps to 3 to 120; the sequence is KKLHIKTWGC…LPEMINHVQG (118 aa). Positions 12, 49, 83, 157, 161, and 164 each coordinate [4Fe-4S] cluster. The Radical SAM core domain maps to 143–375; it reads RAEGPTAFVS…QQRITQQAME (233 aa). The TRAM domain maps to 378-441; the sequence is REMVGTVQRI…ASSLRGILLR (64 aa).

Belongs to the methylthiotransferase family. MiaB subfamily. As to quaternary structure, monomer. The cofactor is [4Fe-4S] cluster.

It is found in the cytoplasm. The catalysed reaction is N(6)-dimethylallyladenosine(37) in tRNA + (sulfur carrier)-SH + AH2 + 2 S-adenosyl-L-methionine = 2-methylsulfanyl-N(6)-dimethylallyladenosine(37) in tRNA + (sulfur carrier)-H + 5'-deoxyadenosine + L-methionine + A + S-adenosyl-L-homocysteine + 2 H(+). In terms of biological role, catalyzes the methylthiolation of N6-(dimethylallyl)adenosine (i(6)A), leading to the formation of 2-methylthio-N6-(dimethylallyl)adenosine (ms(2)i(6)A) at position 37 in tRNAs that read codons beginning with uridine. The polypeptide is tRNA-2-methylthio-N(6)-dimethylallyladenosine synthase (Yersinia enterocolitica serotype O:8 / biotype 1B (strain NCTC 13174 / 8081)).